We begin with the raw amino-acid sequence, 315 residues long: Protoheme IX farnesyltransferase (315 aa).

The next 9 helical transmembrane spans lie at 21 to 41, 52 to 74, 98 to 118, 121 to 141, 150 to 170, 177 to 197, 223 to 243, 246 to 266, and 284 to 304; these read YFAL…LVGL, VGFC…NMWW, GEAL…LALA, LLAA…YSMW, IVIG…AATG, VLMF…LALF, ILVY…TPVA, LYLA…WDIW, and FFKF…AEAI.

This sequence belongs to the UbiA prenyltransferase family. Protoheme IX farnesyltransferase subfamily. Interacts with CtaA.

The protein localises to the cell inner membrane. The enzyme catalyses heme b + (2E,6E)-farnesyl diphosphate + H2O = Fe(II)-heme o + diphosphate. It participates in porphyrin-containing compound metabolism; heme O biosynthesis; heme O from protoheme: step 1/1. Its function is as follows. Converts heme B (protoheme IX) to heme O by substitution of the vinyl group on carbon 2 of heme B porphyrin ring with a hydroxyethyl farnesyl side group. In Dinoroseobacter shibae (strain DSM 16493 / NCIMB 14021 / DFL 12), this protein is Protoheme IX farnesyltransferase.